The primary structure comprises 425 residues: Glutamyl-tRNA reductase (425 aa).

Residues 49 to 52 (TCNR), S109, 114 to 116 (EGQ), and Q120 each bind substrate. The active-site Nucleophile is C50. NADP(+) is bound at residue 189–194 (GAGETG).

This sequence belongs to the glutamyl-tRNA reductase family. Homodimer.

It carries out the reaction (S)-4-amino-5-oxopentanoate + tRNA(Glu) + NADP(+) = L-glutamyl-tRNA(Glu) + NADPH + H(+). It functions in the pathway porphyrin-containing compound metabolism; protoporphyrin-IX biosynthesis; 5-aminolevulinate from L-glutamyl-tRNA(Glu): step 1/2. The protein operates within porphyrin-containing compound metabolism; chlorophyll biosynthesis. Catalyzes the NADPH-dependent reduction of glutamyl-tRNA(Glu) to glutamate 1-semialdehyde (GSA). In Chlorobium phaeobacteroides (strain DSM 266 / SMG 266 / 2430), this protein is Glutamyl-tRNA reductase.